Consider the following 314-residue polypeptide: Homeobox protein knotted-1-like 3 (314 aa).

Residues 218–238 enclose the ELK domain; that stretch reads ELKIELKQGFKSRIEDVREEI. Residues 239-302 constitute a DNA-binding region (homeobox; TALE-type); sequence LRKRRAGKLP…NQRKRNWHNN (64 aa).

Belongs to the TALE/KNOX homeobox family. In terms of tissue distribution, isoform 1 is expressed in roots and flowers, and at lower levels in leaf blades and leaf sheaths. Isoform 2 is expressed in roots and flowers.

The protein localises to the nucleus. This chain is Homeobox protein knotted-1-like 3 (HOS66), found in Oryza sativa subsp. japonica (Rice).